The primary structure comprises 302 residues: Sulfate adenylyltransferase subunit 2 (302 aa).

The segment at 280–302 (RQGRLIDSDQSASMEQKKRQGYF) is disordered.

It belongs to the PAPS reductase family. CysD subfamily. As to quaternary structure, heterodimer composed of CysD, the smaller subunit, and CysN.

It catalyses the reaction sulfate + ATP + H(+) = adenosine 5'-phosphosulfate + diphosphate. It participates in sulfur metabolism; hydrogen sulfide biosynthesis; sulfite from sulfate: step 1/3. With CysN forms the ATP sulfurylase (ATPS) that catalyzes the adenylation of sulfate producing adenosine 5'-phosphosulfate (APS) and diphosphate, the first enzymatic step in sulfur assimilation pathway. APS synthesis involves the formation of a high-energy phosphoric-sulfuric acid anhydride bond driven by GTP hydrolysis by CysN coupled to ATP hydrolysis by CysD. The chain is Sulfate adenylyltransferase subunit 2 from Shewanella sp. (strain ANA-3).